The primary structure comprises 199 residues: ATP-dependent Clp protease proteolytic subunit 2 (199 aa).

S98 serves as the catalytic Nucleophile. H123 is a catalytic residue.

Belongs to the peptidase S14 family. Fourteen ClpP subunits assemble into 2 heptameric rings which stack back to back to give a disk-like structure with a central cavity, resembling the structure of eukaryotic proteasomes.

The protein localises to the cytoplasm. It carries out the reaction Hydrolysis of proteins to small peptides in the presence of ATP and magnesium. alpha-casein is the usual test substrate. In the absence of ATP, only oligopeptides shorter than five residues are hydrolyzed (such as succinyl-Leu-Tyr-|-NHMec, and Leu-Tyr-Leu-|-Tyr-Trp, in which cleavage of the -Tyr-|-Leu- and -Tyr-|-Trp bonds also occurs).. Its function is as follows. Cleaves peptides in various proteins in a process that requires ATP hydrolysis. Has a chymotrypsin-like activity. Plays a major role in the degradation of misfolded proteins. This Treponema pallidum (strain Nichols) protein is ATP-dependent Clp protease proteolytic subunit 2.